Here is a 465-residue protein sequence, read N- to C-terminus: Antithrombin-III (465 aa).

An N-terminal signal peptide occupies residues 1-32 (MYSPGAGSGAAGERKLCLLSLLLIGALGCAIC). 2 cysteine pairs are disulfide-bonded: Cys41-Cys161 and Cys54-Cys128. Thr64 is subject to Phosphothreonine. Position 69 is a phosphoserine (Ser69). Residue Trp82 participates in heparin binding. N-linked (GlcNAc...) asparagine glycosylation is present at Asn129. Arg162 is a heparin binding site. An N-linked (GlcNAc...) asparagine glycan is attached at Asn168. A heparin-binding site is contributed by Arg178. 2 N-linked (GlcNAc...) asparagine glycosylation sites follow: Asn188 and Asn225. Cys280 and Cys463 form a disulfide bridge.

This sequence belongs to the serpin family. In terms of assembly, forms protease inhibiting heterodimer with TMPRSS7. Post-translationally, phosphorylated by FAM20C in the extracellular medium. As to expression, plasma.

It is found in the secreted. It localises to the extracellular space. In terms of biological role, most important serine protease inhibitor in plasma that regulates the blood coagulation cascade. AT-III inhibits thrombin, matriptase-3/TMPRSS7, as well as factors IXa, Xa and XIa. Its inhibitory activity is greatly enhanced in the presence of heparin. This is Antithrombin-III (Serpinc1) from Mus musculus (Mouse).